Here is a 93-residue protein sequence, read N- to C-terminus: Cell division topological specificity factor (93 aa).

This sequence belongs to the MinE family.

Its function is as follows. Prevents the cell division inhibition by proteins MinC and MinD at internal division sites while permitting inhibition at polar sites. This ensures cell division at the proper site by restricting the formation of a division septum at the midpoint of the long axis of the cell. In Methylococcus capsulatus (strain ATCC 33009 / NCIMB 11132 / Bath), this protein is Cell division topological specificity factor.